A 415-amino-acid chain; its full sequence is MGSSTDHGGAGGRGKKGSGSQLWKKALLHSSLCFVMGFFTGFAPSSVSDWTSAAVSAGGVGSSHVVRSLHATGGAAVNRSLLAQAAAGAVDAGPQPLLVVVTTTESTPSAAGQRAAALTRMAHTLRLVPPPLLWVVVEANPDVAATARLLRTTGLMYRHLTYKDNFTVADAAAGKERHHQRNVALGHIEHHRLAGVVLFAGLGDTFDLRFFDQLRQIRTFGAWPVATMSQNERKVVVQGPACSSSSVAGWFSMDLSNATSPVAVGGAGYGAAAARPRELDVHGFAFNSSVLWDPERWGRYPTSEPDKSQDSVKFVQQVVLEDYSKVRGIPSDCSEVMAKLRTVSQQLEATWRSALAIINELLRACASVHGHVRSKLDSLYRSDFPQTEPETLICLIHDHASHYIYGGRFLSGDFC.

The Cytoplasmic portion of the chain corresponds to 1–25; sequence MGSSTDHGGAGGRGKKGSGSQLWKK. A helical; Signal-anchor for type II membrane protein membrane pass occupies residues 26 to 43; that stretch reads ALLHSSLCFVMGFFTGFA. Residues 44–415 lie on the Lumenal side of the membrane; it reads PSSVSDWTSA…GGRFLSGDFC (372 aa). N-linked (GlcNAc...) asparagine glycosylation is found at asparagine 78, asparagine 165, asparagine 257, and asparagine 287.

Belongs to the glycosyltransferase 43 family.

The protein localises to the golgi apparatus membrane. In terms of biological role, involved in the synthesis of glucuronoxylan hemicellulose in secondary cell walls. This Oryza sativa subsp. japonica (Rice) protein is Probable glucuronosyltransferase Os03g0287800.